The following is a 390-amino-acid chain: NADH-quinone oxidoreductase subunit D (390 aa).

It belongs to the complex I 49 kDa subunit family. NDH-1 is composed of 14 different subunits. Subunits NuoB, C, D, E, F, and G constitute the peripheral sector of the complex.

The protein resides in the cell inner membrane. It carries out the reaction a quinone + NADH + 5 H(+)(in) = a quinol + NAD(+) + 4 H(+)(out). In terms of biological role, NDH-1 shuttles electrons from NADH, via FMN and iron-sulfur (Fe-S) centers, to quinones in the respiratory chain. The immediate electron acceptor for the enzyme in this species is believed to be ubiquinone. Couples the redox reaction to proton translocation (for every two electrons transferred, four hydrogen ions are translocated across the cytoplasmic membrane), and thus conserves the redox energy in a proton gradient. The protein is NADH-quinone oxidoreductase subunit D of Geobacter metallireducens (strain ATCC 53774 / DSM 7210 / GS-15).